A 317-amino-acid chain; its full sequence is MEKVYVAGAIPEVGLKLLQEHFEVEMYEGKGLVDKDTLIKGVKDATALISLLSTNVDKDVIDAGKDLKIIANYGAGFNNIDIEYAREKSIDVTNTPKASTNATADLTIGLVLAVARRIVEGDQLSRTTGFDGWAPLFFRGREVSGKTIGIIGLGEIGSAVARRARAFDMDVLYTGPNRKEEKEREIGAKYVDLDTLLKNADFITINAAYNPKMHHLIDTEQFKMMKSTAYLINASRGPIVHEQALVQALKNNEIEGAALDVYEFEPDITDDLKSLNNVVLTPHIGNATFEARDMMSKIVANAAISAVQGEKPQFVVN.

Residues 155–156 (EI), 234–236 (ASR), and Asp260 contribute to the NAD(+) site. The active site involves Arg236. Glu265 is an active-site residue. The active-site Proton donor is the His283. 283 to 286 (HIGN) is an NAD(+) binding site.

Belongs to the D-isomer specific 2-hydroxyacid dehydrogenase family.

This chain is Putative 2-hydroxyacid dehydrogenase SAR2389, found in Staphylococcus aureus (strain MRSA252).